A 273-amino-acid polypeptide reads, in one-letter code: 4-hydroxy-tetrahydrodipicolinate reductase (273 aa).

Residues 8 to 13 (GALGRM), aspartate 35, 103 to 105 (GTT), and 129 to 132 (SQNY) contribute to the NAD(+) site. The Proton donor/acceptor role is filled by histidine 161. Histidine 162 provides a ligand contact to (S)-2,3,4,5-tetrahydrodipicolinate. Lysine 165 serves as the catalytic Proton donor. 171 to 172 (GT) lines the (S)-2,3,4,5-tetrahydrodipicolinate pocket.

Belongs to the DapB family.

It is found in the cytoplasm. It carries out the reaction (S)-2,3,4,5-tetrahydrodipicolinate + NAD(+) + H2O = (2S,4S)-4-hydroxy-2,3,4,5-tetrahydrodipicolinate + NADH + H(+). The catalysed reaction is (S)-2,3,4,5-tetrahydrodipicolinate + NADP(+) + H2O = (2S,4S)-4-hydroxy-2,3,4,5-tetrahydrodipicolinate + NADPH + H(+). Its pathway is amino-acid biosynthesis; L-lysine biosynthesis via DAP pathway; (S)-tetrahydrodipicolinate from L-aspartate: step 4/4. Functionally, catalyzes the conversion of 4-hydroxy-tetrahydrodipicolinate (HTPA) to tetrahydrodipicolinate. The sequence is that of 4-hydroxy-tetrahydrodipicolinate reductase from Methanococcus aeolicus (strain ATCC BAA-1280 / DSM 17508 / OCM 812 / Nankai-3).